Reading from the N-terminus, the 272-residue chain is F-actin-capping protein subunit beta (272 aa).

Ser-2 is modified (N-acetylserine). Ser-2 carries the post-translational modification Phosphoserine. The residue at position 235 (Lys-235) is an N6-acetyllysine. Val-263 bears the Phosphoserine mark.

The protein belongs to the F-actin-capping protein beta subunit family. In terms of assembly, component of the F-actin capping complex, composed of a heterodimer of an alpha and a beta subunit. Subunit of dynactin, a multiprotein complex part of a tripartite complex with dynein and a adapter, such as BICDL1, BICD2 or HOOK3. The dynactin complex is built around ACTR1A/ACTB filament and consists of an actin-related filament composed of a shoulder domain, a pointed end and a barbed end. Its length is defined by its flexible shoulder domain. The soulder is composed of 2 DCTN1 subunits, 4 DCTN2 and 2 DCTN3. The 4 DCNT2 (via N-terminus) bind the ACTR1A filament and act as molecular rulers to determine the length. The pointed end is important for binding dynein-dynactin cargo adapters. Consists of 4 subunits: ACTR10, DCNT4, DCTN5 and DCTN6. The barbed end is composed of a CAPZA1:CAPZB heterodimers, which binds ACTR1A/ACTB filament and dynactin and stabilizes dynactin. Interacts with ARHGAP17. Interaction with RCSD1/CAPZIP. Component of the WASH complex, composed of F-actin-capping protein subunit alpha (CAPZA1, CAPZA2 or CAPZA3), F-actin-capping protein subunit beta (CAPZB), WASH (WASHC1, WASH2P, WASH3P, WASH4P, WASH5P or WASH6P), WASHC2 (WASHC2A or WASHC2C), WASHC3, WASHC4 and WASHC5. Interacts with ACTG1. Directly interacts with CRACD; this interaction decreases binding to actin.

The protein localises to the cytoplasm. It localises to the cytoskeleton. Its subcellular location is the myofibril. It is found in the sarcomere. Its function is as follows. F-actin-capping proteins bind in a Ca(2+)-independent manner to the fast growing ends of actin filaments (barbed end) thereby blocking the exchange of subunits at these ends. Unlike other capping proteins (such as gelsolin and severin), these proteins do not sever actin filaments. Plays a role in the regulation of cell morphology and cytoskeletal organization. Forms, with CAPZB, the barbed end of the fast growing ends of actin filaments in the dynactin complex and stabilizes dynactin structure. The dynactin multiprotein complex activates the molecular motor dynein for ultra-processive transport along microtubules. The sequence is that of F-actin-capping protein subunit beta from Homo sapiens (Human).